The primary structure comprises 298 residues: Lipoyl synthase (298 aa).

7 residues coordinate [4Fe-4S] cluster: Cys40, Cys45, Cys51, Cys67, Cys71, Cys74, and Ser280. The region spanning 53–269 (AVRRTATFMI…KEIAMQKGFS (217 aa)) is the Radical SAM core domain.

Belongs to the radical SAM superfamily. Lipoyl synthase family. It depends on [4Fe-4S] cluster as a cofactor.

The protein resides in the cytoplasm. It carries out the reaction [[Fe-S] cluster scaffold protein carrying a second [4Fe-4S](2+) cluster] + N(6)-octanoyl-L-lysyl-[protein] + 2 oxidized [2Fe-2S]-[ferredoxin] + 2 S-adenosyl-L-methionine + 4 H(+) = [[Fe-S] cluster scaffold protein] + N(6)-[(R)-dihydrolipoyl]-L-lysyl-[protein] + 4 Fe(3+) + 2 hydrogen sulfide + 2 5'-deoxyadenosine + 2 L-methionine + 2 reduced [2Fe-2S]-[ferredoxin]. The protein operates within protein modification; protein lipoylation via endogenous pathway; protein N(6)-(lipoyl)lysine from octanoyl-[acyl-carrier-protein]. Catalyzes the radical-mediated insertion of two sulfur atoms into the C-6 and C-8 positions of the octanoyl moiety bound to the lipoyl domains of lipoate-dependent enzymes, thereby converting the octanoylated domains into lipoylated derivatives. This Bacillus subtilis (strain 168) protein is Lipoyl synthase.